The primary structure comprises 166 residues: Probable calcium-binding protein CML17 (166 aa).

EF-hand domains follow at residues 12 to 47 (EQINELREIFRSFDRNKDGSLTQLELGSLLRALGVK), 48 to 83 (PSPDQFETLIDKADTKSNGLVEFPEFVALVSPELLS), 91 to 126 (YTEEQLLRLFRIFDTDGNGFITAAELAHSMAKLGHA), and 127 to 162 (LTVAELTGMIKEADSDGDGRINFQEFAKAINSAAFD). Ca(2+) is bound by residues Asp25, Asn27, Asp29, Ser31, and Glu36. Residues Asp104, Asp106, Asn108, Glu115, Asp140, Asp142, Asp144, Arg146, and Glu151 each contribute to the Ca(2+) site.

Functionally, potential calcium sensor. The sequence is that of Probable calcium-binding protein CML17 (CML17) from Arabidopsis thaliana (Mouse-ear cress).